A 170-amino-acid chain; its full sequence is MADPSTLTHPDPEGGVRMMDASQKSDSARTAVAAGRVHLGEEAFRRVREHDIEKGDVLTTAQIAGIMGAKQTDKLIPLCHDATINGVEVDFTFNEDEQAIDVRAFTKSFGVTGVEMEALTAVSVASLTIYDMCKSVTKDIRIGDVHLRAKTGGQSGNWKSKSEDTSPAES.

The disordered stretch occupies residues Met-1–Ser-25. Residues Leu-78–His-80 and Met-116–Glu-117 each bind substrate. The active site involves Asp-131.

It belongs to the MoaC family. As to quaternary structure, homohexamer; trimer of dimers.

It catalyses the reaction (8S)-3',8-cyclo-7,8-dihydroguanosine 5'-triphosphate = cyclic pyranopterin phosphate + diphosphate. Its pathway is cofactor biosynthesis; molybdopterin biosynthesis. In terms of biological role, catalyzes the conversion of (8S)-3',8-cyclo-7,8-dihydroguanosine 5'-triphosphate to cyclic pyranopterin monophosphate (cPMP). The chain is Cyclic pyranopterin monophosphate synthase from Salinibacter ruber (strain DSM 13855 / M31).